Consider the following 461-residue polypeptide: Bacterial E1-like protein BilD (461 aa).

C385 acts as the Glycyl thioester intermediate in catalysis.

In terms of biological role, component of the Bil (bacterial ISG15-like) antiviral defense system, composed of BilA, BilB, BilC and BilD. The Bil system specifically conjugates a ubiquitin-like moiety (bilA) to the bacteriophage central tail fiber (CTF, or tip attachment protein J) via reactions involving E1 (bilD) and E2 (bilB). Modifies CTF of phage SECphi27 and SECphi4, which probably interferes with assembly of the phage tail. Also modifies T5 baseplate hub protein pb3 (gene D16), but not gp27 of phage T6 (Bil defends against T6). BilD (E1) catalyzes the first step in conjugation. Activates ubiquitin-like BilA by first adenylating its C-terminal glycine residue with ATP, and then conjugates it to the side chain of a cysteine residue in E1 (this protein), yielding a ubiquitin-E1 thioester and free AMP. Bil-encoding bacteria produce mostly defective phage SECphi27, many of which have phage assembly defects, including no tails. SECphi27 phage progeny produced in E.coli with the Bil system inject less DNA into naive host cells, maybe because the phage are less able to adsorb and inject their DNA into host cells. Functionally, expression of the Bil system in E.coli (strain MG1655) confers about 100-fold resistance to phage SECphi27, SECphi18, SECphi6, SECphi4 and T5, but not to SECphi17. When cells expressing the Bil system are infected by phage SECphi27 at low multiplicity of infection (0.03 MOI) the culture survives, at 3.0 MOI the culture collapses at the same time as cells without the Bil system. This is Bacterial E1-like protein BilD from Collimonas sp. (strain OK412).